We begin with the raw amino-acid sequence, 430 residues long: Enolase (430 aa).

Residue Gln-165 participates in (2R)-2-phosphoglycerate binding. The Proton donor role is filled by Glu-207. Mg(2+) contacts are provided by Asp-244, Glu-287, and Asp-314. The (2R)-2-phosphoglycerate site is built by Lys-339, Arg-368, Ser-369, and Lys-390. Catalysis depends on Lys-339, which acts as the Proton acceptor.

This sequence belongs to the enolase family. As to quaternary structure, component of the RNA degradosome, a multiprotein complex involved in RNA processing and mRNA degradation. Mg(2+) serves as cofactor.

The protein resides in the cytoplasm. The protein localises to the secreted. It localises to the cell surface. It catalyses the reaction (2R)-2-phosphoglycerate = phosphoenolpyruvate + H2O. Its pathway is carbohydrate degradation; glycolysis; pyruvate from D-glyceraldehyde 3-phosphate: step 4/5. Catalyzes the reversible conversion of 2-phosphoglycerate (2-PG) into phosphoenolpyruvate (PEP). It is essential for the degradation of carbohydrates via glycolysis. This is Enolase from Xylella fastidiosa (strain 9a5c).